The following is a 134-amino-acid chain: MILSDEKCDFLESIASFLGPKDVELVFVDSKEMQEINLEQRKQDKTTDVLSFPLENIDESLPLGSVVINVDLAKEKAKELGHSYEEEISLLFIHAMLHLLGFDHENDNGEMREKEKELIEYFNLPKSLIVRTLG.

His-94, His-98, and His-104 together coordinate Zn(2+).

The protein belongs to the endoribonuclease YbeY family. It depends on Zn(2+) as a cofactor.

It localises to the cytoplasm. Single strand-specific metallo-endoribonuclease involved in late-stage 70S ribosome quality control and in maturation of the 3' terminus of the 16S rRNA. The polypeptide is Endoribonuclease YbeY (Campylobacter jejuni subsp. jejuni serotype O:23/36 (strain 81-176)).